An 893-amino-acid chain; its full sequence is MSISGSGCGSPNSADASNDFKELWTKLKEYHDKEVQGLQVKVTKLKKERILDAQRLEEFFTKNQQLRDQQKVLQETIKILEDRLRAGLCDRCAVTEEHMHKKQQEFENIRQQNLKLITELMNEKNTLQEENKKLSEQLQQKMENGQQDQVAELACEENIIPDSPVTSFSFSGINRLRKKENLHVRYVEQTHTKLERSLCTNELRKISKDSAPAPVNSEEHEILVADTCDQNHSPLSKICETSSYPTDKTSFNLDTVVAETLGLNGQEESEPQGPMSPLGSELYHCLKEDHKKHPFMESARSKEDSLRFSDSASKTPPQEFTTRASSPVFGATSTVKAHLGLNTSFSPSLLDIGKKNLLKTAPFSNIAVSRSEKVRSKSEDNALFTQHSLGSEVKVISQSFSSKQILTNKTVSDSVDEQCSADHMNTTVADKYLVPLKSLGGKASKRKRTEEESEHAVKCPQACFDKENALPFPMENQFSMNGDHVMDKPLDLSDRFAATQRQEKNHGNETSKNKLKQATIYEALKPIPKGSSSGRKALSGDCMPAKDSWETYCLQPRSLQSSSKFSPDQKTPLQIKEENPVFKTPPCSQESLETENLFGDVKGTGSLVPTKVKSRAVHGGCELASVLQLNPCRVAKTKALPSNQDTSFENIQWSVDPGADLSQYKMDVTVIDTKDSSHSRLGGETVDMDCTLVSETVLLKMKKQEQKERSPNGDIKMNDSLEDMFDRTTHEEYESCLADSFSQVPDEEELPDTTKKTNIPADKQDGVKQKAFVGPYFKDKERETSIQNFPHIEVVRKKEERRKLLGHTCKECEIYYADLPAEEREKKLASCSRHRFRYIPPNTPENFWEVGFPSTQTCLERGYIKEDLDLSPRPKRRQPYNAVFSPKGKEQRT.

The interval 22-45 (ELWTKLKEYHDKEVQGLQVKVTKL) is essential for binding to the MRN complex and for RPA focus formation on DNA damage. Residues 35–84 (VQGLQVKVTKLKKERILDAQRLEEFFTKNQQLRDQQKVLQETIKILEDRL) are a coiled coil. Positions 45–160 (LKKERILDAQ…AELACEENII (116 aa)) are required for interaction with LMO4, probably by stabilizing the interaction through RPPB8 dimerization. Glycyl lysine isopeptide (Lys-Gly) (interchain with G-Cter in SUMO2) cross-links involve residues lysine 62 and lysine 115. A coiled-coil region spans residues 117 to 138 (ITELMNEKNTLQEENKKLSEQL). Residue lysine 193 forms a Glycyl lysine isopeptide (Lys-Gly) (interchain with G-Cter in SUMO2) linkage. Phosphoserine occurs at positions 233 and 276. Over residues 296-307 (MESARSKEDSLR) the composition is skewed to basic and acidic residues. Positions 296–324 (MESARSKEDSLRFSDSASKTPPQEFTTRA) are disordered. Over residues 308 to 324 (FSDSASKTPPQEFTTRA) the composition is skewed to polar residues. Residue threonine 315 is modified to Phosphothreonine. Residues serine 325, serine 326, and serine 348 each carry the phosphoserine modification. Glycyl lysine isopeptide (Lys-Gly) (interchain with G-Cter in SUMO2) cross-links involve residues lysine 359 and lysine 377. At serine 378 the chain carries Phosphoserine. Residues lysine 394, lysine 403, lysine 409, and lysine 437 each participate in a glycyl lysine isopeptide (Lys-Gly) (interchain with G-Cter in SUMO2) cross-link. The short motif at 489-493 (PLDLS) is the PXDLS motif element. The damage-recruitment motif stretch occupies residues 508–556 (NETSKNKLKQATIYEALKPIPKGSSSGRKALSGDCMPAKDSWETYCLQP). Lysine 525 participates in a covalent cross-link: Glycyl lysine isopeptide (Lys-Gly) (interchain with G-Cter in SUMO2); alternate. Glycyl lysine isopeptide (Lys-Gly) (interchain with G-Cter in SUMO2) cross-links involve residues lysine 529, lysine 570, and lysine 576. Lysine 602 participates in a covalent cross-link: Glycyl lysine isopeptide (Lys-Gly) (interchain with G-Cter in SUMO2); alternate. Residues lysine 611, lysine 636, and lysine 638 each participate in a glycyl lysine isopeptide (Lys-Gly) (interchain with G-Cter in SUMO2) cross-link. Positions 639–683 (ALPSNQDTSFENIQWSVDPGADLSQYKMDVTVIDTKDSSHSRLGG) are required for interaction with LMO4, probably by making physical contact with LMO4. Serine 662 is modified (phosphoserine; by ATM). A Glycyl lysine isopeptide (Lys-Gly) (interchain with G-Cter in SUMO2) cross-link involves residue lysine 674. Residue serine 677 is modified to Phosphoserine. Lysine 716 participates in a covalent cross-link: Glycyl lysine isopeptide (Lys-Gly) (interchain with G-Cter in SUMO2). Serine 720 carries the post-translational modification Phosphoserine. A Phosphoserine; by ATM modification is found at serine 742. Residue lysine 778 forms a Glycyl lysine isopeptide (Lys-Gly) (interchain with G-Cter in SUMO2) linkage. The KLHL15-binding signature appears at 836–838 (FRY). Phosphothreonine occurs at positions 843 and 855. Lysine 865 is covalently cross-linked (Glycyl lysine isopeptide (Lys-Gly) (interchain with G-Cter in SUMO2)). Residues 869–893 (DLSPRPKRRQPYNAVFSPKGKEQRT) are disordered.

This sequence belongs to the COM1/SAE2/CtIP family. In terms of assembly, homotetramer; formed by antiparallel association of helical extensions protruding from the N-termini of two parallel coiled-coil dimers. Forms a dumbbell-shaped particle in which polar globular domains are held about 30 nm apart by a central rod. Homotetramerization is required for DNA-end resection and repair. Interacts (via the PXDLS motif) with CTBP1; the interaction is disrupted via binding of the adenovirus E1A to CTBP1. Component of the BRCA1-RBBP8 complex. Interacts (the Ser-326 phosphorylated form) with BRCA1 (via the C-terminal BRCT domains): the interaction occurs in the G2 phase, ubiquitinates RBBP8 and involves RBBP8 in BRCA1-dependent G2/M checkpoint control on DNA damage. Interacts with RB1. Interacts with the MRN complex. Interacts directly with MRE11; the interaction is required for efficient homologous recombination (HR) and regulation of the MRN complex. Interacts (when phosphorylated by CDK1) with NBN; promoting association with the MRN complex. Interacts with LMO4 (via the LIM zinc-binding 1 domain). Interacts with SIAH1. Interacts with RNF138. Interacts with EXD2. Interacts with CUL3 and KLHL15; this interaction leads to RBBP8 proteasomal degradation. Directly interacts with PIN1; this interaction depends upon RBBP8 phosphorylation, predominantly at Thr-315. Interacts with FZR1; this interaction leads to APC/C-mediated RBBP8 proteasomal degradation. Interacts with AUNIP; leading to recruit RBBP8 to sites of DNA damage. Interacts with SAMHD1. Interacts with HDGFL2. In terms of processing, hyperphosphorylation upon ionizing radiation results in dissociation from BRCA1. Phosphorylation at Thr-843 by CDK1 is essential for the recruitment to DNA and the DNA repair function. Phosphorylation at Thr-843 and Thr-855 promote interaction with NBN and recruitment to double-strand breaks (DSBs). Phosphorylated on Ser-326 as cells enter G2 phase. Phosphorylated at Ser-326 as cells enter G2 phase. This phosphorylation is required for binding BRCA1 and for the G2/M DNA damage transition checkpoint control. Phosphorylation at Thr-315 is required for PIN1-binding, while phosphorylation at Ser-276 serves as a PIN1 isomerization site. Phosphorylation at Thr-315 is cell-cycle dependent. It steadily increases during S phase, peaks at late S/G2 phase, and drops at G1. Phosphorylation is not required for tetramerization. Binds to DNA more strongly when dephosphorylated. Ubiquitinated. Ubiquitination at multiple sites by BRCA1 (via its N-terminal RING domain) does not lead to its proteasomal degradation but instead the ubiquitinated RBBP8 binds to chromatin following DNA damage and may play a role in G2/M checkpoint control. Ubiquitinated by RNF138 at its N-terminus. Ubiquitinated through 'Lys-48' by the E3 CUL3-KLHL15 complex; this modification leads to proteasomal degradation. Ubiquitinated by the E3 FZR1/APC/C complex; this modification leads to proteasomal degradation.

The protein localises to the nucleus. The protein resides in the chromosome. Endonuclease that cooperates with the MRE11-RAD50-NBN (MRN) complex in DNA-end resection, the first step of double-strand break (DSB) repair through the homologous recombination (HR) pathway. HR is restricted to S and G2 phases of the cell cycle and preferentially repairs DSBs resulting from replication fork collapse. Key determinant of DSB repair pathway choice, as it commits cells to HR by preventing classical non-homologous end-joining (NHEJ). Specifically promotes the endonuclease activity of the MRN complex to clear DNA ends containing protein adducts: recruited to DSBs by NBN following phosphorylation by CDK1, and promotes the endonuclease activity of MRE11 to clear protein-DNA adducts and generate clean double-strand break ends. Functions downstream of the MRN complex and ATM, promotes ATR activation and its recruitment to DSBs in the S/G2 phase facilitating the generation of ssDNA. Component of the BRCA1-RBBP8 complex that regulates CHEK1 activation and controls cell cycle G2/M checkpoints on DNA damage. During immunoglobulin heavy chain class-switch recombination, promotes microhomology-mediated alternative end joining (A-NHEJ) and plays an essential role in chromosomal translocations. Binds preferentially to DNA Y-junctions and to DNA substrates with blocked ends and promotes intermolecular DNA bridging. The protein is DNA endonuclease RBBP8 (Rbbp8) of Mus musculus (Mouse).